The following is an 82-amino-acid chain: Toxin Tpa7 (82 aa).

The first 20 residues, 1–20 (MKGMILLISCLMLIEVVVEC), serve as a signal peptide directing secretion. In terms of domain architecture, LCN-type CS-alpha/beta spans 21–82 (KEGYPLDTLN…KIWDLKKNKC (62 aa)). Disulfide bonds link C32/C82, C36/C58, C44/C63, and C48/C65.

Belongs to the long (4 C-C) scorpion toxin superfamily. Sodium channel inhibitor family. Beta subfamily. In terms of tissue distribution, expressed by the venom gland.

The protein resides in the secreted. Functionally, beta toxins bind voltage-independently at site-4 of sodium channels (Nav) and shift the voltage of activation toward more negative potentials thereby affecting sodium channel activation and promoting spontaneous and repetitive firing. This chain is Toxin Tpa7, found in Tityus pachyurus (Colombian scorpion).